Reading from the N-terminus, the 180-residue chain is NAD(P)H-quinone oxidoreductase subunit I, chloroplastic (180 aa).

4Fe-4S ferredoxin-type domains lie at 55–84 (GRIH…VHWR) and 95–124 (LNYS…MTEE). The [4Fe-4S] cluster site is built by Cys-64, Cys-67, Cys-70, Cys-74, Cys-104, Cys-107, Cys-110, and Cys-114.

The protein belongs to the complex I 23 kDa subunit family. NDH is composed of at least 16 different subunits, 5 of which are encoded in the nucleus. It depends on [4Fe-4S] cluster as a cofactor.

The protein localises to the plastid. Its subcellular location is the chloroplast thylakoid membrane. The catalysed reaction is a plastoquinone + NADH + (n+1) H(+)(in) = a plastoquinol + NAD(+) + n H(+)(out). The enzyme catalyses a plastoquinone + NADPH + (n+1) H(+)(in) = a plastoquinol + NADP(+) + n H(+)(out). In terms of biological role, NDH shuttles electrons from NAD(P)H:plastoquinone, via FMN and iron-sulfur (Fe-S) centers, to quinones in the photosynthetic chain and possibly in a chloroplast respiratory chain. The immediate electron acceptor for the enzyme in this species is believed to be plastoquinone. Couples the redox reaction to proton translocation, and thus conserves the redox energy in a proton gradient. The chain is NAD(P)H-quinone oxidoreductase subunit I, chloroplastic from Calycanthus floridus var. glaucus (Eastern sweetshrub).